Reading from the N-terminus, the 372-residue chain is L-selectin (372 aa).

The first 28 residues, 1 to 28 (MIFPWKCQSTQRDLWNIFKLWGWTMLCC), serve as a signal peptide directing secretion. The propeptide occupies 29–38 (DFLAHHGTDC). The Extracellular portion of the chain corresponds to 39–332 (WTYHYSEKPM…FSMIKEGDYN (294 aa)). The C-type lectin domain maps to 55–155 (RFCRDNYTDL…ACHKLKAALC (101 aa)). Intrachain disulfides connect Cys-57–Cys-155, Cys-128–Cys-147, Cys-128–Cys-160, Cys-160–Cys-171, Cys-165–Cys-180, Cys-182–Cys-191, Cys-197–Cys-241, Cys-227–Cys-254, Cys-259–Cys-303, and Cys-289–Cys-316. Asn-60 and Asn-104 each carry an N-linked (GlcNAc...) asparagine glycan. 5 residues coordinate Ca(2+): Glu-118, Asn-120, Glu-126, Asn-143, and Asp-144. The 37-residue stretch at 156–192 (YTASCQPWSCSGHGECVEIINNYTCNCDVGYYGPQCQ) folds into the EGF-like domain. Asn-177 carries an N-linked (GlcNAc...) asparagine glycan. Sushi domains lie at 195–256 (IQCE…TCQV) and 257–318 (IQCE…ICQK). Asn-216, Asn-232, Asn-246, and Asn-271 each carry an N-linked (GlcNAc...) asparagine glycan. A helical transmembrane segment spans residues 333-355 (PLFIPVAVMVTAFSGLAFIIWLA). Topologically, residues 356–372 (RRLKKGKKSKRSMDDPY) are cytoplasmic.

Belongs to the selectin/LECAM family. In terms of assembly, interaction with SELPLG/PSGL1 and PODXL2 is required for promoting recruitment and rolling of leukocytes. This interaction is dependent on the sialyl Lewis X glycan modification of SELPLG and PODXL2, and tyrosine sulfation modifications of SELPLG. Sulfation on 'Tyr-51' of SELPLG is important for L-selectin binding. Post-translationally, N-glycosylated.

Its subcellular location is the cell membrane. Its function is as follows. Calcium-dependent lectin that mediates cell adhesion by binding to glycoproteins on neighboring cells. Mediates the adherence of lymphocytes to endothelial cells of high endothelial venules in peripheral lymph nodes. Promotes initial tethering and rolling of leukocytes in endothelia. This Pan troglodytes (Chimpanzee) protein is L-selectin (SELL).